The following is a 60-amino-acid chain: Mastoparan-VT4 (60 aa).

Positions 1-27 (MKNPILILFTAFIALLGFFGMSAEALA) are cleaved as a signal peptide. 4 AXPX repeats span residues 27-30 (ADPK), 31-34 (ADPL), 35-38 (AGPN), and 41-44 (ADPE). Residues 28–45 (DPKADPLAGPNPDADPEA) constitute a propeptide that is removed on maturation. Leucine 59 bears the Leucine amide mark.

Belongs to the MCD family. Mastoparan subfamily. As to expression, expressed by the venom gland.

Its subcellular location is the secreted. Functionally, the synthetic peptide shows antimicrobial activities against Gram-negative bacteria (but not against all strains tested), Gram-positive bacteria (not all strains tested) and the fungi C.albicans and C.parapsilosis. Exhibits little hemolytic activity against washed human erythrocytes. In Vespa tropica (Greater banded hornet), this protein is Mastoparan-VT4.